A 313-amino-acid polypeptide reads, in one-letter code: MNSGFTHITVLLEEAVEALAVRADGCYLDGTFGRGGHSRLILSQLGPDGRLLGFDKDPQAIATGQALAAEDGRFVIVQRSFAELGSETQERGLAGKVSGILLDLGVSSPQLDDPERGFSFMNDGPLDMRMDPARGISAAEFIATAPAEEIARVFKEYGEERFAKRMANAVVARREVQPFERTADLAEVLKVANPAWEKGKNPATRAFQGLRIHVNNELGDLEAGLEAALDALEVGGRLVVISFHSLEDRIVKLFMRKLAKGEADNMPRNLPIQFKPFEPKIKIHGKAQFASDAETKANPRSRSAVMRVAEKLR.

S-adenosyl-L-methionine is bound by residues 35-37, aspartate 55, phenylalanine 81, aspartate 103, and glutamine 110; that span reads GGH.

The protein belongs to the methyltransferase superfamily. RsmH family.

Its subcellular location is the cytoplasm. The enzyme catalyses cytidine(1402) in 16S rRNA + S-adenosyl-L-methionine = N(4)-methylcytidine(1402) in 16S rRNA + S-adenosyl-L-homocysteine + H(+). Its function is as follows. Specifically methylates the N4 position of cytidine in position 1402 (C1402) of 16S rRNA. The sequence is that of Ribosomal RNA small subunit methyltransferase H from Pseudomonas syringae pv. syringae (strain B728a).